A 231-amino-acid chain; its full sequence is 7-cyano-7-deazaguanine synthase (231 aa).

Residue 17 to 27 (FSGGMDSFTLL) participates in ATP binding. Residues Cys193, Cys201, Cys204, and Cys207 each coordinate Zn(2+).

The protein belongs to the QueC family. It depends on Zn(2+) as a cofactor.

It carries out the reaction 7-carboxy-7-deazaguanine + NH4(+) + ATP = 7-cyano-7-deazaguanine + ADP + phosphate + H2O + H(+). The protein operates within purine metabolism; 7-cyano-7-deazaguanine biosynthesis. In terms of biological role, catalyzes the ATP-dependent conversion of 7-carboxy-7-deazaguanine (CDG) to 7-cyano-7-deazaguanine (preQ(0)). This is 7-cyano-7-deazaguanine synthase from Hahella chejuensis (strain KCTC 2396).